A 406-amino-acid polypeptide reads, in one-letter code: Probable tRNA pseudouridine synthase D (406 aa).

Residue D77 is the Nucleophile of the active site. The TRUD domain maps to 150–371 (GFPNYFGIQR…PGGRRELLIK (222 aa)).

The protein belongs to the pseudouridine synthase TruD family.

The catalysed reaction is uridine(13) in tRNA = pseudouridine(13) in tRNA. Could be responsible for synthesis of pseudouridine from uracil-13 in transfer RNAs. This Pyrococcus abyssi (strain GE5 / Orsay) protein is Probable tRNA pseudouridine synthase D.